The primary structure comprises 523 residues: Glucose-1-phosphate adenylyltransferase large subunit 1, chloroplastic/amyloplastic (523 aa).

The N-terminal 49 residues, 1–49 (MSSMQFSSVLPLEGKACVSPVRREGSACERLKIGDSSSIRHERASRRMC), are a transit peptide targeting the chloroplast.

Belongs to the bacterial/plant glucose-1-phosphate adenylyltransferase family. As to quaternary structure, heterotetramer. As to expression, starchy endosperm and roots.

The protein localises to the plastid. Its subcellular location is the chloroplast. It localises to the amyloplast. The enzyme catalyses alpha-D-glucose 1-phosphate + ATP + H(+) = ADP-alpha-D-glucose + diphosphate. The protein operates within glycan biosynthesis; starch biosynthesis. With respect to regulation, highly active without 3'phosphoglycerate, and is only slightly affected by the activator 3'phosphoglycerate and inhibitor orthophosphate. This protein plays a role in synthesis of starch. It catalyzes the synthesis of the activated glycosyl donor, ADP-glucose from Glc-1-P and ATP. The polypeptide is Glucose-1-phosphate adenylyltransferase large subunit 1, chloroplastic/amyloplastic (Hordeum vulgare (Barley)).